The chain runs to 392 residues: Formate-dependent phosphoribosylglycinamide formyltransferase (392 aa).

Residues 22–23 (EL) and Glu-82 each bind N(1)-(5-phospho-beta-D-ribosyl)glycinamide. Residues Arg-114, Lys-155, 160–165 (SSGKGQ), 195–198 (EGVV), and Glu-203 contribute to the ATP site. The ATP-grasp domain occupies 119–308 (RLAAEELQLP…EFALHVRAFL (190 aa)). Residues Glu-267 and Glu-279 each coordinate Mg(2+). N(1)-(5-phospho-beta-D-ribosyl)glycinamide is bound by residues Asp-286, Lys-355, and 362 to 363 (RR).

This sequence belongs to the PurK/PurT family. In terms of assembly, homodimer.

The catalysed reaction is N(1)-(5-phospho-beta-D-ribosyl)glycinamide + formate + ATP = N(2)-formyl-N(1)-(5-phospho-beta-D-ribosyl)glycinamide + ADP + phosphate + H(+). It functions in the pathway purine metabolism; IMP biosynthesis via de novo pathway; N(2)-formyl-N(1)-(5-phospho-D-ribosyl)glycinamide from N(1)-(5-phospho-D-ribosyl)glycinamide (formate route): step 1/1. Involved in the de novo purine biosynthesis. Catalyzes the transfer of formate to 5-phospho-ribosyl-glycinamide (GAR), producing 5-phospho-ribosyl-N-formylglycinamide (FGAR). Formate is provided by PurU via hydrolysis of 10-formyl-tetrahydrofolate. This chain is Formate-dependent phosphoribosylglycinamide formyltransferase, found in Shigella flexneri.